The chain runs to 445 residues: Ribosomal protein uS12 methylthiotransferase RimO (445 aa).

The region spanning 11 to 121 is the MTTase N-terminal domain; sequence PKISFVSLGC…VLDAVHRASP (111 aa). [4Fe-4S] cluster-binding residues include C20, C56, C85, C152, C156, and C159. Residues 138–375 enclose the Radical SAM core domain; that stretch reads LTPRHYAYLK…MARQQKISAR (238 aa). The TRAM domain occupies 378 to 444; sequence KRKVGTRQQI…EYDLHGTVAG (67 aa).

Belongs to the methylthiotransferase family. RimO subfamily. The cofactor is [4Fe-4S] cluster.

It localises to the cytoplasm. It carries out the reaction L-aspartate(89)-[ribosomal protein uS12]-hydrogen + (sulfur carrier)-SH + AH2 + 2 S-adenosyl-L-methionine = 3-methylsulfanyl-L-aspartate(89)-[ribosomal protein uS12]-hydrogen + (sulfur carrier)-H + 5'-deoxyadenosine + L-methionine + A + S-adenosyl-L-homocysteine + 2 H(+). Catalyzes the methylthiolation of an aspartic acid residue of ribosomal protein uS12. In Bradyrhizobium sp. (strain ORS 278), this protein is Ribosomal protein uS12 methylthiotransferase RimO.